Consider the following 541-residue polypeptide: MIDNDKTHFDAIVIGTGFAGIYMLHKLRNELGLKVRAFDKASGVGGTWYWNKYPGARADTESFVYRYSFDKETSEGWDWRNRYVDQPEMLGYLQAVVDRHGLAKDIQLKTGIDSAVFDEIHHIWTLTTSTGELFTARYLVNAVGVLSKIVIPQIPGRDKFQGQIVHTGAWPADLSLEGKRVGVIGTGSTGVQFICAASKLARHLTVFQRSAQFCVPAGSRQVSEAYVAEYKNNFEQIWDGIRNSRIACGFEESGVSAMSVSEEERQKVFEHHWEIGNGFRFMFGTFSDIAVDPAANQAASDFIRAKIRQIVKDPETARKLCPTDLYAKRPVCTNDYYETYNLPNVSLVSLPENPIKELTANGVLTEDGVEHKLDLLVFATGFETVEGSYNQMEIRGRGGETLQHHWKDAPSSYLGVATAGFPNMFMVLGPNSAFSNLPPSIESQVEWIGELIGWAEGESTPVIETTREAEEAWTATCKEIAAYTLFPKVKSWIFGENIDGRSSRVLFYFGGLAGYRAKLREVADADYEGFILHSDPSSMVA.

FAD-binding positions include aspartate 39, 47 to 50 (TWYW), 59 to 60 (DT), tyrosine 65, and isoleucine 112. Residue 57–59 (RAD) coordinates NADP(+). Residues 186–192 (TGSTGVQ), 209–210 (RS), and tryptophan 492 contribute to the NADP(+) site.

The protein belongs to the FAD-binding monooxygenase family. FAD is required as a cofactor.

It carries out the reaction 1,6-dihydroxyphenazine + NADPH + O2 = 1,6-dihydroxyphenazine N(5)-oxide + NADP(+) + H2O. The catalysed reaction is 1,6-dihydroxyphenazine N(5)-oxide + NADPH + O2 = 1,6-dihydroxyphenazine N(5),N(10)-dioxide + NADP(+) + H2O. It catalyses the reaction 1-hydroxy-6-methoxyphenazine + NADPH + O2 = 1-hydroxy-6-methoxyphenazine N(10)-oxide + NADP(+) + H2O. The enzyme catalyses quinolin-8-ol + NADPH + O2 = 8-hydroxyquinoline N-oxide + NADP(+) + H2O. Functionally, involved in the biosynthesis of phenazine natural products including myxin, an N(5),N(10)-dioxide phenazine antiobiotic, which has antimicrobial activity. Catalyzes the aromatic N-oxidations of phenazines, such as 1,6-dihydroxyphenazine (DHP), 1,6-dihydroxyphenazine N(5)-oxide (DHPO) and 1-hydroxy-6-methoxyphenazine to produce DHPO, iodinin (1,6-dihydroxyphenazine N(5),N(10)-dioxide) and 1-hydroxy-6-methoxyphenazine N(10)-oxide, respectively. Also catalyzes the N-oxidation of 8-hydroxyquinoline, but not 6-hydroxyquinoline (6-HQ), quinoline, quinoxaline, quinine and 2-phenylpyridine. The polypeptide is Phenazine N-monooxygenase PhzNO1 (Lysobacter antibioticus).